Reading from the N-terminus, the 118-residue chain is UPF0342 protein Hore_03100 (118 aa).

This sequence belongs to the UPF0342 family.

The protein is UPF0342 protein Hore_03100 of Halothermothrix orenii (strain H 168 / OCM 544 / DSM 9562).